We begin with the raw amino-acid sequence, 696 residues long: Iron-sulfur clusters transporter ATM1, mitochondrial (696 aa).

The N-terminal 67 residues, 1 to 67 (MIKWGLFGAV…RFFSSSHKLG (67 aa)), are a transit peptide targeting the mitochondrion. Residues 68–109 (VNTKEDSSTYLFGRKISTSESKMLKSLLVTIWPKNKPSFKLR) are Mitochondrial matrix-facing. A helical membrane pass occupies residues 110 to 131 (VIFALSLLIASKLLNVEVPFFF). The ABC transmembrane type-1 domain maps to 110 to 400 (VIFALSLLIA…LGSVYRELKQ (291 aa)). Residues 132–154 (KKIIDEMNVDWNDQLGTVGTVIG) are Mitochondrial intermembrane-facing. The chain crosses the membrane as a helical span at residues 155–178 (TLIIAYGGARFGAVLFGELRNAVF). The Mitochondrial matrix segment spans residues 179–227 (ASVAQTAIKRVAHNTFVHLLNMDLNFHLSRQTGGLTRAIDRGTKGISYV). Residues 228-251 (LNAMVFHIIPISFEISMVCGILIY) form a helical membrane-spanning segment. A topological domain (mitochondrial intermembrane) is located at residue Asn-252. The helical transmembrane segment at 253–273 (YGLSFAAVTLATMLSYSVFTI) threads the bilayer. At 274-339 (KTTAWRTGFR…ASVKVATSLA (66 aa)) the chain is on the mitochondrial matrix side. Glutathione-binding positions include 279 to 283 (RTGFR) and 342 to 345 (NAGQ). Residues 340-358 (YLNAGQNFIFTSALTAMMY) traverse the membrane as a helical segment. Topologically, residues 359 to 373 (MGCNGVATGSLTVGD) are mitochondrial intermembrane. Residues 374–395 (LVLINQLVFQLSVPLSFLGSVY) traverse the membrane as a helical segment. Gly-392 contributes to the glutathione binding site. The Mitochondrial matrix portion of the chain corresponds to 396 to 696 (RELKQSLLDM…EYAKETEEQK (301 aa)). One can recognise an ABC transporter domain in the interval 438-674 (IKFENVTFGY…PNSLYSQLWN (237 aa)). Residues Tyr-447 and 471–482 (GPSGSGKSTILR) each bind ATP.

Belongs to the ABC transporter superfamily. ABCB family. Heavy Metal importer (TC 3.A.1.210) subfamily. Homodimer.

The protein localises to the mitochondrion inner membrane. Performs an essential function in the generation of cytoplasmic iron-sulfur proteins by mediating the ATP-dependent export of Fe/S cluster precursors synthesized by NFS1 and other mitochondrial proteins. Hydrolyzes ATP. Binds glutathione and may function by transporting a glutathione-conjugated iron-sulfur compound. This is Iron-sulfur clusters transporter ATM1, mitochondrial from Debaryomyces hansenii (strain ATCC 36239 / CBS 767 / BCRC 21394 / JCM 1990 / NBRC 0083 / IGC 2968) (Yeast).